A 96-amino-acid polypeptide reads, in one-letter code: Co-chaperonin GroES (96 aa).

The protein belongs to the GroES chaperonin family. As to quaternary structure, heptamer of 7 subunits arranged in a ring. Interacts with the chaperonin GroEL.

The protein localises to the cytoplasm. In terms of biological role, together with the chaperonin GroEL, plays an essential role in assisting protein folding. The GroEL-GroES system forms a nano-cage that allows encapsulation of the non-native substrate proteins and provides a physical environment optimized to promote and accelerate protein folding. GroES binds to the apical surface of the GroEL ring, thereby capping the opening of the GroEL channel. In Polaromonas naphthalenivorans (strain CJ2), this protein is Co-chaperonin GroES.